A 153-amino-acid chain; its full sequence is Small ribosomal subunit protein uS5c (153 aa).

The S5 DRBM domain maps to 11–74 (WQERVIQIRR…VDAKKQLINI (64 aa)).

The protein belongs to the universal ribosomal protein uS5 family. In terms of assembly, part of the 30S ribosomal subunit. Contacts protein S4.

The protein localises to the plastid. Its subcellular location is the chloroplast. Functionally, with S4 and S12 plays an important role in translational accuracy. The sequence is that of Small ribosomal subunit protein uS5c (rps5) from Cyanidioschyzon merolae (strain NIES-3377 / 10D) (Unicellular red alga).